The chain runs to 541 residues: CTP synthase (541 aa).

The segment at 1–265 is amidoligase domain; it reads MTRFIFITGG…DAVVCRHFGL (265 aa). Serine 13 contributes to the CTP binding site. Serine 13 is a binding site for UTP. 14 to 19 contributes to the ATP binding site; the sequence is SLGKGL. Position 54 (tyrosine 54) interacts with L-glutamine. Aspartate 71 is a binding site for ATP. Residues aspartate 71 and glutamate 139 each coordinate Mg(2+). Residues 146-148, 186-191, and lysine 222 each bind CTP; these read DIE and KTKPTQ. Residues 186 to 191 and lysine 222 contribute to the UTP site; that span reads KTKPTQ. The Glutamine amidotransferase type-1 domain occupies 290–540; sequence TIAIVGKYIS…IAAAVRQSRL (251 aa). Residue glycine 352 participates in L-glutamine binding. Cysteine 379 (nucleophile; for glutamine hydrolysis) is an active-site residue. L-glutamine contacts are provided by residues 380 to 383, glutamate 403, and arginine 468; that span reads FGMQ. Active-site residues include histidine 513 and glutamate 515.

Belongs to the CTP synthase family. As to quaternary structure, homotetramer.

It carries out the reaction UTP + L-glutamine + ATP + H2O = CTP + L-glutamate + ADP + phosphate + 2 H(+). The enzyme catalyses L-glutamine + H2O = L-glutamate + NH4(+). The catalysed reaction is UTP + NH4(+) + ATP = CTP + ADP + phosphate + 2 H(+). It participates in pyrimidine metabolism; CTP biosynthesis via de novo pathway; CTP from UDP: step 2/2. Its activity is regulated as follows. Allosterically activated by GTP, when glutamine is the substrate; GTP has no effect on the reaction when ammonia is the substrate. The allosteric effector GTP functions by stabilizing the protein conformation that binds the tetrahedral intermediate(s) formed during glutamine hydrolysis. Inhibited by the product CTP, via allosteric rather than competitive inhibition. Catalyzes the ATP-dependent amination of UTP to CTP with either L-glutamine or ammonia as the source of nitrogen. Regulates intracellular CTP levels through interactions with the four ribonucleotide triphosphates. The sequence is that of CTP synthase from Paramagnetospirillum magneticum (strain ATCC 700264 / AMB-1) (Magnetospirillum magneticum).